The sequence spans 338 residues: Sporulation protein YdcC (338 aa).

A helical membrane pass occupies residues 8–25 (FVLLLTGLLAVLILSACG).

The protein localises to the cell membrane. Functionally, required for efficient sporulation. The polypeptide is Sporulation protein YdcC (ydcC) (Bacillus subtilis (strain 168)).